The chain runs to 214 residues: Predicted GPI-anchored protein 57 (214 aa).

An N-terminal signal peptide occupies residues 1–18; it reads MLFTQLIILFTFISQIIC. Residues 36–101 are disordered; it reads RGSSGHSSGG…SSGSSSGSRN (66 aa). Residues 42–60 are compositionally biased toward gly residues; sequence SSGGGHSSSGSHSSGGGHS. The segment covering 76–85 has biased composition (low complexity); the sequence is SGSSSGSSSG. Residue asparagine 182 is glycosylated (N-linked (GlcNAc...) asparagine). Glycine 191 is lipidated: GPI-anchor amidated glycine. Positions 192–214 are cleaved as a propeptide — removed in mature form; it reads VSLNIPSTHFYVIGLAAAYSIVL.

It belongs to the PGA37 family.

The protein resides in the secreted. It localises to the cell membrane. Its function is as follows. Predicted GPI-anchored protein which may have a role during host infection. In Candida albicans (strain SC5314 / ATCC MYA-2876) (Yeast), this protein is Predicted GPI-anchored protein 57 (PGA57).